The following is a 102-amino-acid chain: NADH-quinone oxidoreductase subunit K 2 (102 aa).

Helical transmembrane passes span 1–21 (MIVP…LGLV), 30–50 (IIMM…AFVG), and 65–85 (LMIM…VVYL).

Belongs to the complex I subunit 4L family. As to quaternary structure, NDH-1 is composed of 14 different subunits. Subunits NuoA, H, J, K, L, M, N constitute the membrane sector of the complex.

The protein resides in the cell inner membrane. The catalysed reaction is a quinone + NADH + 5 H(+)(in) = a quinol + NAD(+) + 4 H(+)(out). In terms of biological role, NDH-1 shuttles electrons from NADH, via FMN and iron-sulfur (Fe-S) centers, to quinones in the respiratory chain. The immediate electron acceptor for the enzyme in this species is believed to be ubiquinone. Couples the redox reaction to proton translocation (for every two electrons transferred, four hydrogen ions are translocated across the cytoplasmic membrane), and thus conserves the redox energy in a proton gradient. In Geotalea daltonii (strain DSM 22248 / JCM 15807 / FRC-32) (Geobacter daltonii), this protein is NADH-quinone oxidoreductase subunit K 2.